Reading from the N-terminus, the 316-residue chain is Transaldolase (316 aa).

The Schiff-base intermediate with substrate role is filled by lysine 132.

Belongs to the transaldolase family. Type 1 subfamily. As to quaternary structure, homodimer.

Its subcellular location is the cytoplasm. It catalyses the reaction D-sedoheptulose 7-phosphate + D-glyceraldehyde 3-phosphate = D-erythrose 4-phosphate + beta-D-fructose 6-phosphate. The protein operates within carbohydrate degradation; pentose phosphate pathway; D-glyceraldehyde 3-phosphate and beta-D-fructose 6-phosphate from D-ribose 5-phosphate and D-xylulose 5-phosphate (non-oxidative stage): step 2/3. Its function is as follows. Transaldolase is important for the balance of metabolites in the pentose-phosphate pathway. The chain is Transaldolase from Vibrio vulnificus (strain CMCP6).